The sequence spans 186 residues: Sec-independent protein translocase protein TatB (186 aa).

The helical transmembrane segment at 1–21 (MFDIGFSELILLMVLGLVVLG) threads the bilayer. The tract at residues 120–186 (NAEKSQNAIS…SKSQSSKTKS (67 aa)) is disordered. The span at 177–186 (SKSQSSKTKS) shows a compositional bias: polar residues.

This sequence belongs to the TatB family. In terms of assembly, the Tat system comprises two distinct complexes: a TatABC complex, containing multiple copies of TatA, TatB and TatC subunits, and a separate TatA complex, containing only TatA subunits. Substrates initially bind to the TatABC complex, which probably triggers association of the separate TatA complex to form the active translocon.

It is found in the cell inner membrane. Functionally, part of the twin-arginine translocation (Tat) system that transports large folded proteins containing a characteristic twin-arginine motif in their signal peptide across membranes. Together with TatC, TatB is part of a receptor directly interacting with Tat signal peptides. TatB may form an oligomeric binding site that transiently accommodates folded Tat precursor proteins before their translocation. In Haemophilus influenzae (strain ATCC 51907 / DSM 11121 / KW20 / Rd), this protein is Sec-independent protein translocase protein TatB.